A 1096-amino-acid polypeptide reads, in one-letter code: Lysine-specific demethylase PHF2 (1096 aa).

The segment at 5-56 adopts a PHD-type zinc-finger fold; that stretch reads PVYCVCRLPYDVTRFMIECDACKDWFHGSCVGVEEEEAPDIDIYHCPNCEKT. 2-oxoglutarate contacts are provided by threonine 193 and threonine 246. One can recognise a JmjC domain in the interval 197–353; it reads FSDTRMSSFV…MQMRAYEVER (157 aa). Fe cation is bound by residues histidine 249 and aspartate 251. 2-oxoglutarate contacts are provided by tyrosine 259, lysine 266, tyrosine 321, and threonine 323. Tyrosine 321 provides a ligand contact to Fe cation. Disordered stretches follow at residues 447-634 and 646-674; these read KAVR…KDNK and GSKALRPPTSPGVFGALQNFKEDKPKPVR. At serine 474 the chain carries Phosphoserine. At threonine 479 the chain carries Phosphothreonine. Residues 503–518 show a composition bias toward pro residues; that stretch reads SKIPKPPKPPKPPRPP. Serine 539 carries the phosphoserine modification. Composition is skewed to basic and acidic residues over residues 548–563 and 578–624; these read LEAHTKEALTKMEPPK and DVVH…KLEK. Position 655 is a phosphoserine (serine 655). A compositionally biased stretch (basic and acidic residues) spans 665 to 674; the sequence is FKEDKPKPVR. A phosphoserine mark is found at serine 681 and serine 705. A Glycyl lysine isopeptide (Lys-Gly) (interchain with G-Cter in SUMO2) cross-link involves residue lysine 711. 3 disordered regions span residues 719-799, 817-846, and 877-1078; these read TKPK…QGML, AGQAKGSSLAAHGARKNGGGSGKSAGKRLL, and YPSL…MATA. N6-acetyllysine is present on lysine 720. Position 728 is a phosphotyrosine (tyrosine 728). A compositionally biased stretch (basic and acidic residues) spans 729 to 757; sequence KSDDSSDEGSLHIDTDTKPGRNARVKKES. Serine 730, serine 733, serine 734, and serine 738 each carry phosphoserine. Serine 879, serine 882, and serine 899 each carry phosphoserine. Residues 916–925 are compositionally biased toward basic and acidic residues; sequence RQDRPVREGT. Positions 949-959 are enriched in basic residues; it reads SKKKKSAKRKL. Composition is skewed to low complexity over residues 960–1009 and 1027–1040; these read TPNT…EGSS and TAAGTFTGAQAGRT. Positions 1053–1065 are enriched in polar residues; sequence RRPSASSPNNNTA. Serine 1056 is modified (phosphoserine; by PKA).

It belongs to the JHDM1 histone demethylase family. JHDM1D subfamily. In terms of assembly, component of the PHF2-ARID5B complex, at least composed of PHF2 and ARID5B. Interacts with HNF4A and NR1H4. Interacts with RELA. Phosphorylated by PKA on specific serine residues, leading to the formation of an active lysine demethylase complex. As to expression, widely expressed, including in liver (at protein level).

The protein localises to the nucleus. It localises to the nucleolus. It is found in the chromosome. The protein resides in the centromere. Its subcellular location is the kinetochore. The enzyme catalyses N(6),N(6)-dimethyl-L-lysyl(9)-[histone H3] + 2-oxoglutarate + O2 = N(6)-methyl-L-lysyl(9)-[histone H3] + formaldehyde + succinate + CO2. Enzymatically inactive by itself, and become active following phosphorylation by PKA. Lysine demethylase that demethylates both histones and non-histone proteins. Enzymatically inactive by itself, and becomes active following phosphorylation by PKA: forms a complex with ARID5B and mediates demethylation of methylated ARID5B. Demethylation of ARID5B leads to target the PHF2-ARID5B complex to target promoters, where PHF2 mediates demethylation of dimethylated 'Lys-9' of histone H3 (H3K9me2), followed by transcription activation of target genes. The PHF2-ARID5B complex acts as a coactivator of HNF4A in liver. PHF2 is recruited to trimethylated 'Lys-4' of histone H3 (H3K4me3) at rDNA promoters and promotes expression of rDNA. Involved in the activation of toll-like receptor 4 (TLR4)-target inflammatory genes in macrophages by catalyzing the demethylation of trimethylated histone H4 lysine 20 (H4K20me3) at the gene promoters. The chain is Lysine-specific demethylase PHF2 from Homo sapiens (Human).